The primary structure comprises 85 residues: Cell division topological specificity factor (85 aa).

It belongs to the MinE family.

Prevents the cell division inhibition by proteins MinC and MinD at internal division sites while permitting inhibition at polar sites. This ensures cell division at the proper site by restricting the formation of a division septum at the midpoint of the long axis of the cell. The polypeptide is Cell division topological specificity factor (Shewanella sp. (strain ANA-3)).